The following is a 263-amino-acid chain: Putative replication protein PDa0002 (263 aa).

The polypeptide is Putative replication protein PDa0002 (Xylella fastidiosa (strain Temecula1 / ATCC 700964)).